A 660-amino-acid chain; its full sequence is Bifunctional polymyxin resistance protein ArnA (660 aa).

Residues 1-304 (MKAIVFAYHD…EMGIVTDVRV (304 aa)) form a formyltransferase ArnAFT region. The Proton donor; for formyltransferase activity role is filled by His-104. Residues Arg-114 and 136-140 (TAKAD) contribute to the (6R)-10-formyltetrahydrofolate site. The interval 314 to 660 (RRQRVLILGV…RGAVEELGNK (347 aa)) is dehydrogenase ArnADH. Residues Asp-347 and 368 to 369 (DV) each bind NAD(+). UDP-alpha-D-glucuronate-binding positions include Ala-393, Tyr-398, and 432–433 (TS). Glu-434 acts as the Proton acceptor; for decarboxylase activity in catalysis. UDP-alpha-D-glucuronate-binding positions include Arg-460, Asn-492, 526–535 (KLVDGGEQKR), and Tyr-613. The active-site Proton donor; for decarboxylase activity is the Arg-619.

In the N-terminal section; belongs to the Fmt family. UDP-L-Ara4N formyltransferase subfamily. It in the C-terminal section; belongs to the NAD(P)-dependent epimerase/dehydratase family. UDP-glucuronic acid decarboxylase subfamily. In terms of assembly, homohexamer, formed by a dimer of trimers.

It catalyses the reaction UDP-alpha-D-glucuronate + NAD(+) = UDP-beta-L-threo-pentopyranos-4-ulose + CO2 + NADH. The catalysed reaction is UDP-4-amino-4-deoxy-beta-L-arabinose + (6R)-10-formyltetrahydrofolate = UDP-4-deoxy-4-formamido-beta-L-arabinose + (6S)-5,6,7,8-tetrahydrofolate + H(+). It functions in the pathway nucleotide-sugar biosynthesis; UDP-4-deoxy-4-formamido-beta-L-arabinose biosynthesis; UDP-4-deoxy-4-formamido-beta-L-arabinose from UDP-alpha-D-glucuronate: step 1/3. Its pathway is nucleotide-sugar biosynthesis; UDP-4-deoxy-4-formamido-beta-L-arabinose biosynthesis; UDP-4-deoxy-4-formamido-beta-L-arabinose from UDP-alpha-D-glucuronate: step 3/3. It participates in bacterial outer membrane biogenesis; lipopolysaccharide biosynthesis. In terms of biological role, bifunctional enzyme that catalyzes the oxidative decarboxylation of UDP-glucuronic acid (UDP-GlcUA) to UDP-4-keto-arabinose (UDP-Ara4O) and the addition of a formyl group to UDP-4-amino-4-deoxy-L-arabinose (UDP-L-Ara4N) to form UDP-L-4-formamido-arabinose (UDP-L-Ara4FN). The modified arabinose is attached to lipid A and is required for resistance to polymyxin and cationic antimicrobial peptides. In Proteus mirabilis (strain HI4320), this protein is Bifunctional polymyxin resistance protein ArnA.